Consider the following 246-residue polypeptide: 3-deoxy-manno-octulosonate cytidylyltransferase (246 aa).

This sequence belongs to the KdsB family.

The protein localises to the cytoplasm. The enzyme catalyses 3-deoxy-alpha-D-manno-oct-2-ulosonate + CTP = CMP-3-deoxy-beta-D-manno-octulosonate + diphosphate. It functions in the pathway nucleotide-sugar biosynthesis; CMP-3-deoxy-D-manno-octulosonate biosynthesis; CMP-3-deoxy-D-manno-octulosonate from 3-deoxy-D-manno-octulosonate and CTP: step 1/1. The protein operates within bacterial outer membrane biogenesis; lipopolysaccharide biosynthesis. Functionally, activates KDO (a required 8-carbon sugar) for incorporation into bacterial lipopolysaccharide in Gram-negative bacteria. This Chloroherpeton thalassium (strain ATCC 35110 / GB-78) protein is 3-deoxy-manno-octulosonate cytidylyltransferase.